We begin with the raw amino-acid sequence, 235 residues long: uncharacterized protein (235 aa).

A run of 7 helical transmembrane segments spans residues 2 to 22, 34 to 54, 56 to 76, 102 to 122, 147 to 167, 178 to 198, and 210 to 230; these read VIGPFINASAVLLGGVLGALL, MTSIFGLASLGIGILLVVKCA, LPAMVLATLLGALIGEICLLE, FIQNYVAIIVLFCASGTGIFG, MIFACSLGIAVSVISIPLLII, ILPLTTPSMMADFSAVGGLLL, and MFPVVNMLPALLLAMPLSAAW.

Its subcellular location is the cell membrane. This is an uncharacterized protein from Escherichia coli (strain K12).